Here is a 200-residue protein sequence, read N- to C-terminus: ATP-dependent Clp protease proteolytic subunit 1 (200 aa).

The active-site Nucleophile is Ser102. The active site involves His127.

This sequence belongs to the peptidase S14 family. Fourteen ClpP subunits assemble into 2 heptameric rings which stack back to back to give a disk-like structure with a central cavity, resembling the structure of eukaryotic proteasomes.

The protein localises to the cytoplasm. The enzyme catalyses Hydrolysis of proteins to small peptides in the presence of ATP and magnesium. alpha-casein is the usual test substrate. In the absence of ATP, only oligopeptides shorter than five residues are hydrolyzed (such as succinyl-Leu-Tyr-|-NHMec, and Leu-Tyr-Leu-|-Tyr-Trp, in which cleavage of the -Tyr-|-Leu- and -Tyr-|-Trp bonds also occurs).. In terms of biological role, cleaves peptides in various proteins in a process that requires ATP hydrolysis. Has a chymotrypsin-like activity. Plays a major role in the degradation of misfolded proteins. This Bradyrhizobium diazoefficiens (strain JCM 10833 / BCRC 13528 / IAM 13628 / NBRC 14792 / USDA 110) protein is ATP-dependent Clp protease proteolytic subunit 1.